The primary structure comprises 274 residues: Elongation factor Ts (274 aa).

The segment at 79 to 82 is involved in Mg(2+) ion dislocation from EF-Tu; it reads TDFV.

It belongs to the EF-Ts family.

The protein localises to the cytoplasm. In terms of biological role, associates with the EF-Tu.GDP complex and induces the exchange of GDP to GTP. It remains bound to the aminoacyl-tRNA.EF-Tu.GTP complex up to the GTP hydrolysis stage on the ribosome. The chain is Elongation factor Ts from Porphyromonas gingivalis (strain ATCC 33277 / DSM 20709 / CIP 103683 / JCM 12257 / NCTC 11834 / 2561).